A 692-amino-acid chain; its full sequence is Elongation factor G (692 aa).

In terms of domain architecture, tr-type G spans 8-282 (AKTRNIGIMA…AVIAYLPSPL (275 aa)). GTP is bound by residues 17–24 (AHVDAGKT), 81–85 (DTPGH), and 135–138 (NKMD).

Belongs to the TRAFAC class translation factor GTPase superfamily. Classic translation factor GTPase family. EF-G/EF-2 subfamily.

The protein resides in the cytoplasm. Its function is as follows. Catalyzes the GTP-dependent ribosomal translocation step during translation elongation. During this step, the ribosome changes from the pre-translocational (PRE) to the post-translocational (POST) state as the newly formed A-site-bound peptidyl-tRNA and P-site-bound deacylated tRNA move to the P and E sites, respectively. Catalyzes the coordinated movement of the two tRNA molecules, the mRNA and conformational changes in the ribosome. The polypeptide is Elongation factor G (Streptococcus equi subsp. zooepidemicus (strain MGCS10565)).